A 369-amino-acid polypeptide reads, in one-letter code: MKVIISGGGTAGHINPGLAIAKYIKKREPDTEILFIGTERGLEARLVPRENFEIKMIKVRGFKRKLSMDTLVAVKELFQGLAEARKIIKDYKPDLVIGTGGYVCGPVLFNASRMKIPTLVHEQNAFPGVTNKILSKFVDRVAISFKEAEKYFKDKSKVVFTGNPIRSEMLEVSRETARKKLGIPKDMPLVVIFGGSRGAENINSTVAELIKRHKSDLGFYLIYATGEAQYDGIMKKIGEVKSPNINILPYIFDMANAMAAADLVVCRAGAITVSELTALGVPSILIPSPYVTANHQEHNARALERQGASVVILEKNLRPDILYEEITTLLKDRNKLSQMAKNAKSIGITNATERIYEIIKDIMKNKAAG.

Residues Thr10–Gly12, Asn124, Arg166, Ser196, Ile251, and Gln296 contribute to the UDP-N-acetyl-alpha-D-glucosamine site.

It belongs to the glycosyltransferase 28 family. MurG subfamily.

Its subcellular location is the cell membrane. The catalysed reaction is di-trans,octa-cis-undecaprenyl diphospho-N-acetyl-alpha-D-muramoyl-L-alanyl-D-glutamyl-meso-2,6-diaminopimeloyl-D-alanyl-D-alanine + UDP-N-acetyl-alpha-D-glucosamine = di-trans,octa-cis-undecaprenyl diphospho-[N-acetyl-alpha-D-glucosaminyl-(1-&gt;4)]-N-acetyl-alpha-D-muramoyl-L-alanyl-D-glutamyl-meso-2,6-diaminopimeloyl-D-alanyl-D-alanine + UDP + H(+). Its pathway is cell wall biogenesis; peptidoglycan biosynthesis. Cell wall formation. Catalyzes the transfer of a GlcNAc subunit on undecaprenyl-pyrophosphoryl-MurNAc-pentapeptide (lipid intermediate I) to form undecaprenyl-pyrophosphoryl-MurNAc-(pentapeptide)GlcNAc (lipid intermediate II). The protein is UDP-N-acetylglucosamine--N-acetylmuramyl-(pentapeptide) pyrophosphoryl-undecaprenol N-acetylglucosamine transferase of Acetivibrio thermocellus (strain ATCC 27405 / DSM 1237 / JCM 9322 / NBRC 103400 / NCIMB 10682 / NRRL B-4536 / VPI 7372) (Clostridium thermocellum).